The primary structure comprises 430 residues: 3-phosphoshikimate 1-carboxyvinyltransferase (430 aa).

3-phosphoshikimate-binding residues include lysine 23, serine 24, and arginine 28. Lysine 23 is a binding site for phosphoenolpyruvate. Positions 95 and 123 each coordinate phosphoenolpyruvate. 3-phosphoshikimate contacts are provided by serine 169, glutamine 171, aspartate 315, and lysine 342. Glutamine 171 contacts phosphoenolpyruvate. Aspartate 315 functions as the Proton acceptor in the catalytic mechanism. The phosphoenolpyruvate site is built by arginine 346 and arginine 388.

Belongs to the EPSP synthase family. In terms of assembly, monomer.

The protein resides in the cytoplasm. It catalyses the reaction 3-phosphoshikimate + phosphoenolpyruvate = 5-O-(1-carboxyvinyl)-3-phosphoshikimate + phosphate. It functions in the pathway metabolic intermediate biosynthesis; chorismate biosynthesis; chorismate from D-erythrose 4-phosphate and phosphoenolpyruvate: step 6/7. Catalyzes the transfer of the enolpyruvyl moiety of phosphoenolpyruvate (PEP) to the 5-hydroxyl of shikimate-3-phosphate (S3P) to produce enolpyruvyl shikimate-3-phosphate and inorganic phosphate. In Streptococcus pyogenes serotype M1, this protein is 3-phosphoshikimate 1-carboxyvinyltransferase.